The chain runs to 233 residues: MARKVVVVDDEKPIADILEFNLKKEGYDVYCAYDGNDAVDLIYEEEPDIVLLDIMLPGRDGMEVCREVRKKYEMPIIMLTAKDSEIDKVLGLELGADDYVTKPFSTRELIARVKANLRRHYSQPAQEVSGATNEITIKDIVIYPDAYSIKKRGEDIELTHREFELFHYLSKHMGQVMTREHLLQTVWGYDYFGDVRTVDVTIRRLREKIEDDPSHPEYIVTRRGVGYFLQQHD.

Positions 4-117 constitute a Response regulatory domain; the sequence is KVVVVDDEKP…ELIARVKANL (114 aa). The residue at position 53 (Asp53) is a 4-aspartylphosphate. Residues 132-231 constitute a DNA-binding region (ompR/PhoB-type); the sequence is TNEITIKDIV…RRGVGYFLQQ (100 aa).

In terms of processing, phosphorylated by WalK.

The protein localises to the cytoplasm. Member of the two-component regulatory system WalK/WalR. This chain is Transcriptional regulatory protein WalR (walR), found in Staphylococcus epidermidis (strain ATCC 12228 / FDA PCI 1200).